The following is a 190-amino-acid chain: Potassium-transporting ATPase KdpC subunit (190 aa).

The helical transmembrane segment at 13 to 33 threads the bilayer; the sequence is VGFLLLTLMCGVVYPGIVTIF.

It belongs to the KdpC family. As to quaternary structure, the system is composed of three essential subunits: KdpA, KdpB and KdpC.

It localises to the cell membrane. Functionally, part of the high-affinity ATP-driven potassium transport (or Kdp) system, which catalyzes the hydrolysis of ATP coupled with the electrogenic transport of potassium into the cytoplasm. This subunit acts as a catalytic chaperone that increases the ATP-binding affinity of the ATP-hydrolyzing subunit KdpB by the formation of a transient KdpB/KdpC/ATP ternary complex. This Listeria monocytogenes serotype 4b (strain CLIP80459) protein is Potassium-transporting ATPase KdpC subunit.